The chain runs to 514 residues: Serine--tRNA ligase, cytoplasmic (514 aa).

Position 1 is an N-acetylmethionine (M1). Residues 9–61 (RVDKGGDPALIRETQEKRFKDPGLVDQLVKADSEWRRCRFRADNLNKLKNLCS) form an interaction with tRNA region. Phosphoserine is present on S241. L-serine contacts are provided by T271 and R302. Residues 302–304 (RQE) and 318–321 (VHQF) each bind ATP. K323 bears the N6-acetyllysine mark. E325 is a binding site for L-serine. 391-394 (ELVS) is an ATP binding site. An L-serine-binding site is contributed by N427. Residues 473–514 (PAPIEQEPSKKQKKQHEGSKKKAAARDVTLENRLQNMEVTDA) form a disordered region. Residues 479–502 (EPSKKQKKQHEGSKKKAAARDVTL) show a composition bias toward basic and acidic residues. The Nuclear localization signal motif lies at 482 to 494 (KKQKKQHEGSKKK). Polar residues predominate over residues 504 to 514 (NRLQNMEVTDA).

It belongs to the class-II aminoacyl-tRNA synthetase family. Type-1 seryl-tRNA synthetase subfamily. Homodimer. The tRNA molecule may bind across the dimer. Interacts with SIRT2. Interacts with METTL6; interaction is required for the tRNA N(3)-methylcytidine methyltransferase activity of METTL6. As to expression, brain.

It is found in the cytoplasm. It localises to the nucleus. The enzyme catalyses tRNA(Ser) + L-serine + ATP = L-seryl-tRNA(Ser) + AMP + diphosphate + H(+). It carries out the reaction tRNA(Sec) + L-serine + ATP = L-seryl-tRNA(Sec) + AMP + diphosphate + H(+). It participates in aminoacyl-tRNA biosynthesis; selenocysteinyl-tRNA(Sec) biosynthesis; L-seryl-tRNA(Sec) from L-serine and tRNA(Sec): step 1/1. Catalyzes the attachment of serine to tRNA(Ser) in a two-step reaction: serine is first activated by ATP to form Ser-AMP and then transferred to the acceptor end of tRNA(Ser). Is probably also able to aminoacylate tRNA(Sec) with serine, to form the misacylated tRNA L-seryl-tRNA(Sec), which will be further converted into selenocysteinyl-tRNA(Sec). In the nucleus, binds to the VEGFA core promoter and prevents MYC binding and transcriptional activation by MYC. Recruits SIRT2 to the VEGFA promoter, promoting deacetylation of histone H4 at 'Lys-16' (H4K16). Thereby, inhibits the production of VEGFA and sprouting angiogenesis mediated by VEGFA. This chain is Serine--tRNA ligase, cytoplasmic, found in Homo sapiens (Human).